Consider the following 141-residue polypeptide: Hemoglobin subunit alpha-D (141 aa).

In terms of domain architecture, Globin spans 1–141 (MLTADDKKLL…VAAVLAEKYR (141 aa)). 2 residues coordinate heme b: His-58 and His-87.

This sequence belongs to the globin family. As to quaternary structure, heterotetramer of two alpha-D chains and two beta chains. As to expression, red blood cells.

In terms of biological role, involved in oxygen transport from the lung to the various peripheral tissues. This Chloephaga melanoptera (Andean goose) protein is Hemoglobin subunit alpha-D (HBAD).